The sequence spans 334 residues: ADP-L-glycero-D-manno-heptose-6-epimerase (334 aa).

NADP(+) contacts are provided by residues 11–12 (FI), 32–33 (DN), Lys-39, Lys-54, 77–81 (QGACS), and Asn-94. Tyr-141 acts as the Proton acceptor in catalysis. NADP(+) is bound at residue Lys-145. Residue Asn-171 coordinates substrate. 2 residues coordinate NADP(+): Val-172 and Lys-180. The active-site Proton acceptor is the Lys-180. Residues Arg-182, His-189, 203-206 (FGSN), Arg-216, and Tyr-295 contribute to the substrate site.

It belongs to the NAD(P)-dependent epimerase/dehydratase family. HldD subfamily. Homopentamer. NADP(+) serves as cofactor.

The enzyme catalyses ADP-D-glycero-beta-D-manno-heptose = ADP-L-glycero-beta-D-manno-heptose. It functions in the pathway nucleotide-sugar biosynthesis; ADP-L-glycero-beta-D-manno-heptose biosynthesis; ADP-L-glycero-beta-D-manno-heptose from D-glycero-beta-D-manno-heptose 7-phosphate: step 4/4. Its function is as follows. Catalyzes the interconversion between ADP-D-glycero-beta-D-manno-heptose and ADP-L-glycero-beta-D-manno-heptose via an epimerization at carbon 6 of the heptose. The chain is ADP-L-glycero-D-manno-heptose-6-epimerase from Neisseria meningitidis serogroup C (strain 053442).